Here is a 434-residue protein sequence, read N- to C-terminus: CBL-interacting protein kinase 15 (434 aa).

A Protein kinase domain is found at 12–267; sequence YELGRLLGKG…IQKIKESTWF (256 aa). Residues 18 to 26 and Lys-41 each bind ATP; that span reads LGKGTFGKV. Asp-135 functions as the Proton acceptor in the catalytic mechanism. The activation loop stretch occupies residues 153-182; sequence DFGLSALSESKRQDGLLHTTCGTPAYVAPE. One can recognise an NAF domain in the interval 298–333; sequence RKKNAHEDVKPMSVTNLNAFEIISFSKGFDLSGMFI. The interval 338-367 is PPI; sequence RNEARFTSDKSASTIISKLEDVAKALNLRV.

This sequence belongs to the protein kinase superfamily. CAMK Ser/Thr protein kinase family. SNF1 subfamily. The cofactor is Mn(2+).

The catalysed reaction is L-seryl-[protein] + ATP = O-phospho-L-seryl-[protein] + ADP + H(+). The enzyme catalyses L-threonyl-[protein] + ATP = O-phospho-L-threonyl-[protein] + ADP + H(+). In terms of biological role, involved in salt stress tolerance. CIPK serine-threonine protein kinases interact with CBL proteins. Binding of a CBL protein to the regulatory NAF domain of CIPK protein lead to the activation of the kinase in a calcium-dependent manner. This chain is CBL-interacting protein kinase 15 (CIPK15), found in Oryza sativa subsp. japonica (Rice).